Reading from the N-terminus, the 338-residue chain is Probable tRNA pseudouridine synthase B (338 aa).

D78 serves as the catalytic Nucleophile. The region spanning 245–320 (LPKIILRDSA…IAASPIRVLM (76 aa)) is the PUA domain.

This sequence belongs to the pseudouridine synthase TruB family. Type 2 subfamily.

It carries out the reaction uridine(55) in tRNA = pseudouridine(55) in tRNA. In terms of biological role, could be responsible for synthesis of pseudouridine from uracil-55 in the psi GC loop of transfer RNAs. This Methanosarcina mazei (strain ATCC BAA-159 / DSM 3647 / Goe1 / Go1 / JCM 11833 / OCM 88) (Methanosarcina frisia) protein is Probable tRNA pseudouridine synthase B.